A 300-amino-acid polypeptide reads, in one-letter code: Ribosomal protein L11 methyltransferase (300 aa).

4 residues coordinate S-adenosyl-L-methionine: Thr-152, Gly-173, Asp-195, and Asn-234.

The protein belongs to the methyltransferase superfamily. PrmA family.

It is found in the cytoplasm. The enzyme catalyses L-lysyl-[protein] + 3 S-adenosyl-L-methionine = N(6),N(6),N(6)-trimethyl-L-lysyl-[protein] + 3 S-adenosyl-L-homocysteine + 3 H(+). Methylates ribosomal protein L11. The chain is Ribosomal protein L11 methyltransferase from Burkholderia mallei (strain NCTC 10247).